Consider the following 370-residue polypeptide: Translocating chain-associated membrane protein 2 (370 aa).

Residues 1–22 (MAFRRRTKSYPLFSQEFVIHNH) are Cytoplasmic-facing. Residues 23-43 (ADIGFCLVLCVLIGLMFEVTA) form a helical membrane-spanning segment. Topologically, residues 44 to 75 (KTAFLFILPQYNISVPTADSETVHYHYGPKDL) are extracellular. Asn-55 carries an N-linked (GlcNAc...) asparagine glycan. A helical transmembrane segment spans residues 76–96 (VTILFYIFITIILHAVVQEYI). Residues 97–119 (LDKISKRLHLSKVKHSKFNESGQ) lie on the Cytoplasmic side of the membrane. The 210-residue stretch at 112–321 (SKFNESGQLV…HSQLRHWREY (210 aa)) folds into the TLC domain. The helical transmembrane segment at 120–140 (LVVFHFTSVIWCFYVVVTEGY) threads the bilayer. Residues 141 to 159 (LTNPRSLWEDYPHVHLPFQ) are Extracellular-facing. Residues 160 to 180 (VKFFYLCQLAYWLHALPELYF) traverse the membrane as a helical segment. The Cytoplasmic segment spans residues 181–191 (QKVRKEEIPRQ). Residues 192-209 (LQYICLYLVHIAGAYLLN) form a helical membrane-spanning segment. Over 210-214 (LSRLG) the chain is Extracellular. A helical membrane pass occupies residues 215 to 235 (LILLLLQYSTEFLFHTARLFY). The Cytoplasmic segment spans residues 236–250 (FADENNEKLFSAWAA). A helical transmembrane segment spans residues 251–271 (VFGVTRLFILTLAVLAIGFGL). Over 272–287 (ARMENQAFDPEKGNFN) the chain is Extracellular. The helical transmembrane segment at 288 to 308 (TLFCRLCVLLLVCAAQAWLMW) threads the bilayer. The Cytoplasmic portion of the chain corresponds to 309–370 (RFIHSQLRHW…SPRTKKLKSP (62 aa)). Residues 348-370 (YHENGVVKAENGTSPRTKKLKSP) are disordered.

The protein belongs to the TRAM family. Interacts with SERCA2B and COL1A1.

It localises to the membrane. Its function is as follows. Necessary for collagen type I synthesis. May couple the activity of the ER Ca(2+) pump SERCA2B with the activity of the translocon. This coupling may increase the local Ca(2+) concentration at the site of collagen synthesis, and a high Ca(2+) concentration may be necessary for the function of molecular chaperones involved in collagen folding. Required for proper insertion of the first transmembrane helix N-terminus of TM4SF20 into the ER lumen, may act as a ceramide sensor for regulated alternative translocation (RAT). This chain is Translocating chain-associated membrane protein 2 (TRAM2), found in Homo sapiens (Human).